The following is a 97-amino-acid chain: Protein YcgL (97 aa).

Residues 1 to 85 (MLCVIYRSSK…PPEDLLKQHL (85 aa)) form the YcgL domain.

The chain is Protein YcgL from Escherichia fergusonii (strain ATCC 35469 / DSM 13698 / CCUG 18766 / IAM 14443 / JCM 21226 / LMG 7866 / NBRC 102419 / NCTC 12128 / CDC 0568-73).